Here is a 261-residue protein sequence, read N- to C-terminus: ATP synthase subunit a (261 aa).

8 consecutive transmembrane segments (helical) span residues 30–50, 63–83, 96–116, 125–145, 151–171, 187–207, 214–234, and 235–255; these read VLFTNSALWMVVAAITLGLFM, WQVAVEGFTGFISSMMMANIG, LFMFILFCNLLGMLPLGVLGL, IAITGVLALISFAIVLVVGFW, FFSLFVPHGTPLPMIPIIAPI, LFVAMTAGHVLLKVLSGFVIN, LWLGSIVSVLSFTLMIGISAL, and ELLVAGIQAYVFALLTSLYIN.

It belongs to the ATPase A chain family. As to quaternary structure, F-type ATPases have 2 components, CF(1) - the catalytic core - and CF(0) - the membrane proton channel. CF(1) has five subunits: alpha(3), beta(3), gamma(1), delta(1), epsilon(1). CF(0) has three main subunits: a(1), b(2) and c(9-12). The alpha and beta chains form an alternating ring which encloses part of the gamma chain. CF(1) is attached to CF(0) by a central stalk formed by the gamma and epsilon chains, while a peripheral stalk is formed by the delta and b chains.

The protein localises to the cell inner membrane. Functionally, key component of the proton channel; it plays a direct role in the translocation of protons across the membrane. This is ATP synthase subunit a from Sphingopyxis alaskensis (strain DSM 13593 / LMG 18877 / RB2256) (Sphingomonas alaskensis).